A 125-amino-acid chain; its full sequence is UPF0389 protein CG9231 (125 aa).

A helical membrane pass occupies residues 69 to 88 (IRLANIMIALTAVGCAIMVY). N-linked (GlcNAc...) asparagine glycosylation occurs at asparagine 112.

This sequence belongs to the UPF0389 family.

It is found in the membrane. This is UPF0389 protein CG9231 from Drosophila melanogaster (Fruit fly).